A 107-amino-acid chain; its full sequence is Integration host factor subunit alpha (107 aa).

This sequence belongs to the bacterial histone-like protein family. Heterodimer of an alpha and a beta chain.

Functionally, this protein is one of the two subunits of integration host factor, a specific DNA-binding protein that functions in genetic recombination as well as in transcriptional and translational control. This chain is Integration host factor subunit alpha, found in Brucella abortus (strain S19).